A 421-amino-acid polypeptide reads, in one-letter code: D-inositol 3-phosphate glycosyltransferase (421 aa).

Residue His-9 participates in 1D-myo-inositol 3-phosphate binding. UDP-N-acetyl-alpha-D-glucosamine-binding positions include Gln-15–Pro-16 and Gly-23. 1D-myo-inositol 3-phosphate-binding positions include Asp-20–Asn-25, Lys-78, Tyr-110, Thr-134, and Arg-154. Residues Arg-231, Lys-236, and Arg-294 each contribute to the UDP-N-acetyl-alpha-D-glucosamine site. Positions 303, 304, and 306 each coordinate Mg(2+). 2 residues coordinate UDP-N-acetyl-alpha-D-glucosamine: Glu-316 and Glu-324. Thr-330 contacts Mg(2+).

It belongs to the glycosyltransferase group 1 family. MshA subfamily. As to quaternary structure, homodimer.

The enzyme catalyses 1D-myo-inositol 3-phosphate + UDP-N-acetyl-alpha-D-glucosamine = 1D-myo-inositol 2-acetamido-2-deoxy-alpha-D-glucopyranoside 3-phosphate + UDP + H(+). Functionally, catalyzes the transfer of a N-acetyl-glucosamine moiety to 1D-myo-inositol 3-phosphate to produce 1D-myo-inositol 2-acetamido-2-deoxy-glucopyranoside 3-phosphate in the mycothiol biosynthesis pathway. In Corynebacterium aurimucosum (strain ATCC 700975 / DSM 44827 / CIP 107346 / CN-1) (Corynebacterium nigricans), this protein is D-inositol 3-phosphate glycosyltransferase.